Consider the following 553-residue polypeptide: Flagellar hook-associated protein 1 (553 aa).

The protein belongs to the flagella basal body rod proteins family.

It localises to the secreted. Its subcellular location is the bacterial flagellum. The chain is Flagellar hook-associated protein 1 (flgK) from Salmonella typhi.